The chain runs to 211 residues: 2,3-bisphosphoglycerate-dependent phosphoglycerate mutase (211 aa).

Substrate contacts are provided by residues 9–16 (RHGQSEWN), 22–23 (TG), R61, 88–91 (ERDY), K99, 115–116 (RR), and 159–160 (GN). The Tele-phosphohistidine intermediate role is filled by H10. Residue E88 is the Proton donor/acceptor of the active site.

The protein belongs to the phosphoglycerate mutase family. BPG-dependent PGAM subfamily. In terms of assembly, homodimer.

It carries out the reaction (2R)-2-phosphoglycerate = (2R)-3-phosphoglycerate. The protein operates within carbohydrate degradation; glycolysis; pyruvate from D-glyceraldehyde 3-phosphate: step 3/5. Functionally, catalyzes the interconversion of 2-phosphoglycerate and 3-phosphoglycerate. The protein is 2,3-bisphosphoglycerate-dependent phosphoglycerate mutase of Sinorhizobium fredii (strain NBRC 101917 / NGR234).